A 1211-amino-acid chain; its full sequence is DNA-directed RNA polymerase subunit beta' (1211 aa).

C60, C62, C75, and C78 together coordinate Zn(2+). Positions 450, 452, and 454 each coordinate Mg(2+). Residues C819, C893, C900, and C903 each contribute to the Zn(2+) site.

This sequence belongs to the RNA polymerase beta' chain family. In terms of assembly, the RNAP catalytic core consists of 2 alpha, 1 beta, 1 beta' and 1 omega subunit. When a sigma factor is associated with the core the holoenzyme is formed, which can initiate transcription. Requires Mg(2+) as cofactor. Zn(2+) is required as a cofactor.

It catalyses the reaction RNA(n) + a ribonucleoside 5'-triphosphate = RNA(n+1) + diphosphate. DNA-dependent RNA polymerase catalyzes the transcription of DNA into RNA using the four ribonucleoside triphosphates as substrates. This chain is DNA-directed RNA polymerase subunit beta', found in Streptococcus equi subsp. equi (strain 4047).